The chain runs to 263 residues: Ribosomal RNA small subunit methyltransferase A (263 aa).

H13, L15, G40, E61, D86, and N105 together coordinate S-adenosyl-L-methionine.

This sequence belongs to the class I-like SAM-binding methyltransferase superfamily. rRNA adenine N(6)-methyltransferase family. RsmA subfamily.

It is found in the cytoplasm. It catalyses the reaction adenosine(1518)/adenosine(1519) in 16S rRNA + 4 S-adenosyl-L-methionine = N(6)-dimethyladenosine(1518)/N(6)-dimethyladenosine(1519) in 16S rRNA + 4 S-adenosyl-L-homocysteine + 4 H(+). Its function is as follows. Specifically dimethylates two adjacent adenosines (A1518 and A1519) in the loop of a conserved hairpin near the 3'-end of 16S rRNA in the 30S particle. May play a critical role in biogenesis of 30S subunits. This is Ribosomal RNA small subunit methyltransferase A from Dichelobacter nodosus (strain VCS1703A).